We begin with the raw amino-acid sequence, 490 residues long: NAD/NADP-dependent betaine aldehyde dehydrogenase (490 aa).

Residues T26, I27, and D93 each contribute to the K(+) site. 150–153 (GAWN) is a binding site for NADPH. Catalysis depends on K162, which acts as the Charge relay system. 176–179 (KPSE) serves as a coordination point for NADPH. Residue V180 coordinates K(+). NADPH contacts are provided by residues G209 and 230-233 (GTST). K(+) is bound at residue L246. E252 serves as the catalytic Proton acceptor. Residues C286 and E387 each contribute to the NADPH site. The active-site Nucleophile is C286. C286 is modified (cysteine sulfenic acid (-SOH)). K(+) contacts are provided by K457 and G460. E464 serves as the catalytic Charge relay system.

This sequence belongs to the aldehyde dehydrogenase family. In terms of assembly, dimer of dimers. K(+) serves as cofactor.

It carries out the reaction betaine aldehyde + NAD(+) + H2O = glycine betaine + NADH + 2 H(+). It catalyses the reaction betaine aldehyde + NADP(+) + H2O = glycine betaine + NADPH + 2 H(+). It functions in the pathway amine and polyamine biosynthesis; betaine biosynthesis via choline pathway; betaine from betaine aldehyde: step 1/1. In terms of biological role, involved in the biosynthesis of the osmoprotectant glycine betaine. Catalyzes the irreversible oxidation of betaine aldehyde to the corresponding acid. In P.aeruginosa this reaction is a compulsory step in the assimilation of carbon and nitrogen when bacteria are growing in choline or choline precursors. Can use NADP(+) with similar efficiency to NAD(+), a property that can be used by the bacterium to produce the NADPH needed to combat the oxidative stress imposed by the host defenses. The sequence is that of NAD/NADP-dependent betaine aldehyde dehydrogenase from Pseudomonas aeruginosa (strain ATCC 15692 / DSM 22644 / CIP 104116 / JCM 14847 / LMG 12228 / 1C / PRS 101 / PAO1).